A 461-amino-acid polypeptide reads, in one-letter code: Chromosomal replication initiator protein DnaA (461 aa).

A domain I, interacts with DnaA modulators region spans residues 1–68; sequence MINAWAQIEH…EKAAASVLGS (68 aa). Residues 68-118 form a domain II region; it reads SVPTITVVSGEEPAAAPRPVQVPAQKRPAAARTSGAEQMGLPLHYASRSAD. A domain III, AAA+ region region spans residues 119–336; the sequence is SIKWMHSFDE…SCLRNLLLKA (218 aa). Gly162, Gly164, Lys165, and Thr166 together coordinate ATP. The tract at residues 337–461 is domain IV, binds dsDNA; it reads RLLNQQITMD…VERNGRIIHP (125 aa).

Belongs to the DnaA family. Oligomerizes as a right-handed, spiral filament on DNA at oriC.

It is found in the cytoplasm. In terms of biological role, plays an essential role in the initiation and regulation of chromosomal replication. ATP-DnaA binds to the origin of replication (oriC) to initiate formation of the DNA replication initiation complex once per cell cycle. Binds the DnaA box (a 9 base pair repeat at the origin) and separates the double-stranded (ds)DNA. Forms a right-handed helical filament on oriC DNA; dsDNA binds to the exterior of the filament while single-stranded (ss)DNA is stabiized in the filament's interior. The ATP-DnaA-oriC complex binds and stabilizes one strand of the AT-rich DNA unwinding element (DUE), permitting loading of DNA polymerase. After initiation quickly degrades to an ADP-DnaA complex that is not apt for DNA replication. Binds acidic phospholipids. This is Chromosomal replication initiator protein DnaA from Oleidesulfovibrio alaskensis (strain ATCC BAA-1058 / DSM 17464 / G20) (Desulfovibrio alaskensis).